The chain runs to 227 residues: Cytochrome c oxidase subunit 2 (227 aa).

At 1–14 (MAYPFQLGLQDATS) the chain is on the mitochondrial intermembrane side. The chain crosses the membrane as a helical span at residues 15-45 (PIMEELANFHDHTLMIVFLISSLVLYIISSM). At 46 to 59 (LTTKLTHTSTMDAQ) the chain is on the mitochondrial matrix side. Residues 60-87 (EVETIWTILPAVILILIALPSLRILYMM) traverse the membrane as a helical segment. The Mitochondrial intermembrane segment spans residues 88–227 (DEINNPALTV…HFENWSASMI (140 aa)). Positions 161, 196, 198, 200, 204, and 207 each coordinate Cu cation. Mg(2+) is bound at residue glutamate 198.

This sequence belongs to the cytochrome c oxidase subunit 2 family. As to quaternary structure, component of the cytochrome c oxidase (complex IV, CIV), a multisubunit enzyme composed of 14 subunits. The complex is composed of a catalytic core of 3 subunits MT-CO1, MT-CO2 and MT-CO3, encoded in the mitochondrial DNA, and 11 supernumerary subunits COX4I, COX5A, COX5B, COX6A, COX6B, COX6C, COX7A, COX7B, COX7C, COX8 and NDUFA4, which are encoded in the nuclear genome. The complex exists as a monomer or a dimer and forms supercomplexes (SCs) in the inner mitochondrial membrane with NADH-ubiquinone oxidoreductase (complex I, CI) and ubiquinol-cytochrome c oxidoreductase (cytochrome b-c1 complex, complex III, CIII), resulting in different assemblies (supercomplex SCI(1)III(2)IV(1) and megacomplex MCI(2)III(2)IV(2)). Found in a complex with TMEM177, COA6, COX18, COX20, SCO1 and SCO2. Interacts with TMEM177 in a COX20-dependent manner. Interacts with COX20. Interacts with COX16. The cofactor is Cu cation.

It localises to the mitochondrion inner membrane. It catalyses the reaction 4 Fe(II)-[cytochrome c] + O2 + 8 H(+)(in) = 4 Fe(III)-[cytochrome c] + 2 H2O + 4 H(+)(out). In terms of biological role, component of the cytochrome c oxidase, the last enzyme in the mitochondrial electron transport chain which drives oxidative phosphorylation. The respiratory chain contains 3 multisubunit complexes succinate dehydrogenase (complex II, CII), ubiquinol-cytochrome c oxidoreductase (cytochrome b-c1 complex, complex III, CIII) and cytochrome c oxidase (complex IV, CIV), that cooperate to transfer electrons derived from NADH and succinate to molecular oxygen, creating an electrochemical gradient over the inner membrane that drives transmembrane transport and the ATP synthase. Cytochrome c oxidase is the component of the respiratory chain that catalyzes the reduction of oxygen to water. Electrons originating from reduced cytochrome c in the intermembrane space (IMS) are transferred via the dinuclear copper A center (CU(A)) of subunit 2 and heme A of subunit 1 to the active site in subunit 1, a binuclear center (BNC) formed by heme A3 and copper B (CU(B)). The BNC reduces molecular oxygen to 2 water molecules using 4 electrons from cytochrome c in the IMS and 4 protons from the mitochondrial matrix. The chain is Cytochrome c oxidase subunit 2 (MT-CO2) from Malacomys longipes (Big-eared swamp rat).